The chain runs to 56 residues: Large ribosomal subunit protein bL33 (56 aa).

It belongs to the bacterial ribosomal protein bL33 family.

This chain is Large ribosomal subunit protein bL33, found in Glaesserella parasuis serovar 5 (strain SH0165) (Haemophilus parasuis).